The following is a 403-amino-acid chain: Serine/threonine-protein phosphatase 4 regulatory subunit 2-A (403 aa).

3 stretches are compositionally biased toward polar residues: residues 140–149, 156–170, and 183–196; these read EKNNSTSLNR, PSNS…NVNG, and SLSS…LPDS. The tract at residues 140 to 403 is disordered; the sequence is EKNNSTSLNR…DAPEEPMEQD (264 aa). Residues 197–211 are compositionally biased toward basic and acidic residues; that stretch reads TENKESDLQQKEKSQ. Polar residues-rich tracts occupy residues 212-226 and 371-387; these read SDSA…ATTS and ATSS…SPME. Positions 388–403 are enriched in acidic residues; the sequence is NSEEATDAPEEPMEQD.

Belongs to the PPP4R2 family. In terms of assembly, serine/threonine-protein phosphatase 4 (PP4) occurs in different assemblies of the catalytic and one or more regulatory subunits.

Functionally, regulatory subunit of serine/threonine-protein phosphatase 4 (PP4). This chain is Serine/threonine-protein phosphatase 4 regulatory subunit 2-A (ppp4r2-a), found in Xenopus laevis (African clawed frog).